The following is a 92-amino-acid chain: Small ribosomal subunit protein uS19 (92 aa).

It belongs to the universal ribosomal protein uS19 family.

Protein S19 forms a complex with S13 that binds strongly to the 16S ribosomal RNA. The polypeptide is Small ribosomal subunit protein uS19 (Buchnera aphidicola subsp. Schizaphis graminum (strain Sg)).